We begin with the raw amino-acid sequence, 165 residues long: MDIAHDLQSIGAQEQALVFPQFDPARAWALGNRMHALATARGHAIAIDIATFGQPLFFAALAGATPDNADWVRRKRNVVAHFRRSSYAIGLRMQQAGATLADKHGLPISEYSPHGGSFPLTVAGAGVIGSITASGLPQRADHEFVVEALCAELGHDYAVLALERS.

It belongs to the UPF0303 family.

This is UPF0303 protein Bcep1808_1522 from Burkholderia vietnamiensis (strain G4 / LMG 22486) (Burkholderia cepacia (strain R1808)).